The following is a 284-amino-acid chain: Short-chain dehydrogenase RED1 (284 aa).

Positions 11, 37, 58, 86, 151, 155, 184, and 186 each coordinate NADP(+). Tyrosine 151 (proton acceptor) is an active-site residue. Lysine 155 functions as the Lowers pKa of active site Tyr in the catalytic mechanism.

Belongs to the short-chain dehydrogenases/reductases (SDR) family.

It participates in polyketide biosynthesis. Its function is as follows. Short-chain dehydrogenase; part of the gene cluster that mediates the biosynthesis of pyriculol and pyriculariol, two heptaketides that induce lesion formation upon application on rice leaves but are dispensable for pathogenicity. The highly reducing polyketide synthase synthesizes the heptaketide backbone of pyriculol and pyriculariol. Pyriculol and pyriculariol contain several hydroxyl moieties and double bonds, so it can be assumed that several reduction steps occur during biosynthesis. These reactions could be executed by PKS19 itself or partly by the tailoring enzymes OXR1, OXR2, RED1, RED2 or RED3, identified within the cluster. The FAD-linked oxidoreductase OXR1 is the only tailoring enzyme for which the function has been determined yet, and is involved in the oxidation of dihydropyriculol and dihydropyriculariol into pyriculol and pyriculariol, respectively. This is Short-chain dehydrogenase RED1 from Pyricularia oryzae (strain 70-15 / ATCC MYA-4617 / FGSC 8958) (Rice blast fungus).